A 244-amino-acid polypeptide reads, in one-letter code: NAD-dependent protein deacetylase (244 aa).

The Deacetylase sirtuin-type domain occupies 1 to 244 (MDDKINKLKE…IGKVLGKVID (244 aa)). The NAD(+) site is built by alanine 24, threonine 28, phenylalanine 35, arginine 36, glutamine 105, isoleucine 107, aspartate 108, and histidine 123. Phenylalanine 35 is a binding site for nicotinamide. Positions 107 and 108 each coordinate nicotinamide. Histidine 123 acts as the Proton acceptor in catalysis. 4 residues coordinate Zn(2+): cysteine 131, cysteine 134, cysteine 152, and cysteine 155. NAD(+)-binding residues include threonine 193, serine 194, asparagine 217, and isoleucine 235.

The protein belongs to the sirtuin family. Class U subfamily. It depends on Zn(2+) as a cofactor.

It localises to the cytoplasm. It carries out the reaction N(6)-acetyl-L-lysyl-[protein] + NAD(+) + H2O = 2''-O-acetyl-ADP-D-ribose + nicotinamide + L-lysyl-[protein]. Its function is as follows. NAD-dependent protein deacetylase which modulates the activities of several enzymes which are inactive in their acetylated form. The sequence is that of NAD-dependent protein deacetylase from Clostridium perfringens (strain 13 / Type A).